The sequence spans 206 residues: Large ribosomal subunit protein uL4 (206 aa).

The segment at 43–78 is disordered; that stretch reads ARSGNRKQKDREEVHHTTKKPWRQKGTGRARAGMSS. Over residues 49–58 the composition is skewed to basic and acidic residues; the sequence is KQKDREEVHH. The span at 59 to 70 shows a compositional bias: basic residues; the sequence is TTKKPWRQKGTG.

Belongs to the universal ribosomal protein uL4 family. Part of the 50S ribosomal subunit.

Its function is as follows. One of the primary rRNA binding proteins, this protein initially binds near the 5'-end of the 23S rRNA. It is important during the early stages of 50S assembly. It makes multiple contacts with different domains of the 23S rRNA in the assembled 50S subunit and ribosome. Forms part of the polypeptide exit tunnel. The sequence is that of Large ribosomal subunit protein uL4 from Herminiimonas arsenicoxydans.